A 231-amino-acid polypeptide reads, in one-letter code: Orotate phosphoribosyltransferase (231 aa).

5-phospho-alpha-D-ribose 1-diphosphate contacts are provided by residues Lys-27, 79–80 (YK), Arg-106, Lys-107, Lys-110, His-112, and 133–141 (DDVMTAGTA). Orotate-binding residues include Thr-137 and Arg-166.

The protein belongs to the purine/pyrimidine phosphoribosyltransferase family. PyrE subfamily. In terms of assembly, homodimer. The cofactor is Mg(2+).

It catalyses the reaction orotidine 5'-phosphate + diphosphate = orotate + 5-phospho-alpha-D-ribose 1-diphosphate. The protein operates within pyrimidine metabolism; UMP biosynthesis via de novo pathway; UMP from orotate: step 1/2. Its function is as follows. Catalyzes the transfer of a ribosyl phosphate group from 5-phosphoribose 1-diphosphate to orotate, leading to the formation of orotidine monophosphate (OMP). The protein is Orotate phosphoribosyltransferase of Bifidobacterium adolescentis (strain ATCC 15703 / DSM 20083 / NCTC 11814 / E194a).